We begin with the raw amino-acid sequence, 595 residues long: Beta-(1--&gt;2)glucan export ATP-binding/permease protein NdvA (595 aa).

5 helical membrane passes run 21–41, 56–76, 129–149, 158–178, and 252–272; these read FLLI…EPIL, LVTL…YVLV, IWLE…VLVP, LSIV…LVMQ, and ISIV…QLSV. Residues 21–301 form the ABC transmembrane type-1 domain; the sequence is FLLICTANIT…ISGFINLAVS (281 aa). Residues 335 to 569 enclose the ABC transporter domain; it reads IQFHHVTYEF…DGHFYKLLKR (235 aa). Residue 368-375 coordinates ATP; sequence GPTGAGKT.

Belongs to the ABC transporter superfamily. Beta-(1--&gt;2)glucan exporter (TC 3.A.1.108.1) family. In terms of assembly, homodimer.

The protein resides in the cell inner membrane. It catalyses the reaction [(1-&gt;2)-beta-D-glucosyl](n)(in) + ATP + H2O = [(1-&gt;2)-beta-D-glucosyl](n)(out) + ADP + phosphate + H(+). Involved in beta-(1--&gt;2)glucan export. Transmembrane domains (TMD) form a pore in the inner membrane and the ATP-binding domain (NBD) is responsible for energy generation. This chain is Beta-(1--&gt;2)glucan export ATP-binding/permease protein NdvA, found in Bartonella bacilliformis.